We begin with the raw amino-acid sequence, 514 residues long: Maturase K (514 aa).

This sequence belongs to the intron maturase 2 family. MatK subfamily.

It localises to the plastid. The protein localises to the chloroplast. Functionally, usually encoded in the trnK tRNA gene intron. Probably assists in splicing its own and other chloroplast group II introns. The chain is Maturase K from Zamia integrifolia (Coontie).